The following is a 432-amino-acid chain: Chaperone SurA (432 aa).

Residues 1-26 form the signal peptide; the sequence is MKKIASFCSAAVLIASSFLLNNTVQA. PpiC domains follow at residues 176 to 277 and 286 to 386; these read QTEY…KVQD and VQEV…EVTG.

Its subcellular location is the periplasm. The enzyme catalyses [protein]-peptidylproline (omega=180) = [protein]-peptidylproline (omega=0). Its function is as follows. Chaperone involved in the correct folding and assembly of outer membrane proteins. Recognizes specific patterns of aromatic residues and the orientation of their side chains, which are found more frequently in integral outer membrane proteins. May act in both early periplasmic and late outer membrane-associated steps of protein maturation. This is Chaperone SurA from Idiomarina loihiensis (strain ATCC BAA-735 / DSM 15497 / L2-TR).